A 252-amino-acid chain; its full sequence is Expansin-A12 (252 aa).

The N-terminal stretch at 1 to 23 (MDMKGTYLVTVILLVSTLSVGMC) is a signal peptide. The region spanning 45–156 (GGACGYDNPY…RRVGCKRRGG (112 aa)) is the Expansin-like EG45 domain. An Expansin-like CBD domain is found at 166–246 (NFNMVMISNV…SWWFGQTFSS (81 aa)).

The protein belongs to the expansin family. Expansin A subfamily.

It is found in the secreted. The protein resides in the cell wall. The protein localises to the membrane. In terms of biological role, causes loosening and extension of plant cell walls by disrupting non-covalent bonding between cellulose microfibrils and matrix glucans. No enzymatic activity has been found. This is Expansin-A12 (EXPA12) from Arabidopsis thaliana (Mouse-ear cress).